Reading from the N-terminus, the 570-residue chain is La-related protein 7 (570 aa).

The residue at position 1 (Met1) is an N-acetylmethionine. The span at 1–16 (METENQKTMEESTKRK) shows a compositional bias: basic and acidic residues. 2 disordered regions span residues 1–24 (METENQKTMEESTKRKEEKKKRSR) and 180–364 (LNNP…ERHK). Residues 22 to 116 (RSRVKQVLAD…KPLGERPKDE (95 aa)) enclose the HTH La-type RNA-binding domain. Residues 119 to 197 (RTVYVELLPK…PRKPGIFPKT (79 aa)) enclose the RRM domain. Over residues 213–222 (KKKKKKKGRI) the composition is skewed to basic residues. A Glycyl lysine isopeptide (Lys-Gly) (interchain with G-Cter in SUMO2) cross-link involves residue Lys231. Residue Thr251 is modified to Phosphothreonine. Phosphoserine occurs at positions 253 and 256. At Thr260 the chain carries Phosphothreonine. Over residues 286–295 (RAGKRERCSA) the composition is skewed to basic and acidic residues. Residues Ser294 and Ser334 each carry the phosphoserine modification. Residue Thr335 is modified to Phosphothreonine. A compositionally biased stretch (basic and acidic residues) spans 340–349 (ETDRKGDSLS). Ser347 bears the Phosphoserine mark. The span at 350 to 363 (KVKRKHKKKHKERH) shows a compositional bias: basic residues. Lys406 is covalently cross-linked (Glycyl lysine isopeptide (Lys-Gly) (interchain with G-Cter in SUMO2)). Positions 438–551 (QFVTGVIVKI…TEKLITKAEK (114 aa)) constitute a xRRM domain.

This sequence belongs to the LARP7 family. Core component of the 7SK RNP complex, at least composed of 7SK RNA, LARP7, MEPCE, HEXIM1 (or HEXIM2) and P-TEFb (composed of CDK9 and CCNT1/cyclin-T1). Interacts with METTL16. Interacts with RBM7; upon genotoxic stress this interaction is enhanced, triggering the release of inactive P-TEFb complex from the core, yielding to P-TEFb complex activation. Associates with box C/D small nucleolar ribonucleoprotein (snoRNP) complexes.

The protein localises to the nucleus. It localises to the nucleoplasm. In terms of biological role, RNA-binding protein that specifically binds distinct small nuclear RNA (snRNAs) and regulates their processing and function. Specifically binds the 7SK snRNA (7SK RNA) and acts as a core component of the 7SK ribonucleoprotein (RNP) complex, thereby acting as a negative regulator of transcription elongation by RNA polymerase II. The 7SK RNP complex sequesters the positive transcription elongation factor b (P-TEFb) in a large inactive 7SK RNP complex preventing RNA polymerase II phosphorylation and subsequent transcriptional elongation. The 7SK RNP complex also promotes snRNA gene transcription by RNA polymerase II via interaction with the little elongation complex (LEC). LARP7 specifically binds to the highly conserved 3'-terminal U-rich stretch of 7SK RNA; on stimulation, remains associated with 7SK RNA, whereas P-TEFb is released from the complex. LARP7 also acts as a regulator of mRNA splicing fidelity by promoting U6 snRNA processing. Specifically binds U6 snRNAs and associates with a subset of box C/D RNP complexes: promotes U6 snRNA 2'-O-methylation by facilitating U6 snRNA loading into box C/D RNP complexes. U6 snRNA 2'-O-methylation is required for mRNA splicing fidelity. Binds U6 snRNAs with a 5'-CAGGG-3' sequence motif. U6 snRNA processing is required for spermatogenesis. In Mus musculus (Mouse), this protein is La-related protein 7.